Consider the following 231-residue polypeptide: Large ribosomal subunit protein uL5m (231 aa).

This sequence belongs to the universal ribosomal protein uL5 family.

It localises to the mitochondrion. This chain is Large ribosomal subunit protein uL5m (RPL5), found in Prototheca wickerhamii.